We begin with the raw amino-acid sequence, 722 residues long: PAB1-binding protein 1 (722 aa).

Over residues 1–10 (MKGNFRKRDS) the composition is skewed to basic and acidic residues. Residues 1–38 (MKGNFRKRDSSTNSRKGGNSDSNYTNGGVPNQNNSSMF) are disordered. Residues 11-38 (STNSRKGGNSDSNYTNGGVPNQNNSSMF) are compositionally biased toward polar residues. Positions 51–107 (RQDYLLANSIGSDVTVTVTSGVKYTGLLVSCNLESTNGIDVVLRFPRVADSGVSDSV) constitute a Sm domain. Residue S106 is modified to Phosphoserine. The residue at position 193 (T193) is a Phosphothreonine. S215 is modified (phosphoserine). 3 disordered regions span residues 305 to 380 (ALKS…LSSK), 412 to 488 (SSTL…NPHT), and 683 to 722 (GSGP…SGHK). Composition is skewed to low complexity over residues 307–316 (KSNSKPNSNK), 338–347 (SSSNSNKNEN), 356–370 (PAAA…PQKT), and 412–421 (SSTLKSNSSL). K344 is covalently cross-linked (Glycyl lysine isopeptide (Lys-Gly) (interchain with G-Cter in ubiquitin)). Residues 429-455 (TPSAKTVSPTTQISAGKSESRRSGSNI) are compositionally biased toward polar residues. The residue at position 436 (S436) is a Phosphoserine. A compositionally biased stretch (low complexity) spans 456–471 (SQGQSSTGHTTRSSTS). Residues 698–722 (SHGHSRNYHQTSHHGHHNSSTSGHK) show a composition bias toward basic residues.

This sequence belongs to the ataxin-2 family. In terms of assembly, interacts (via C-terminus) with MKT1 (via C-terminus). Interacts with FIR1, IGO1, LSM12, PBP4 and PAB1.

Its subcellular location is the cytoplasm. It localises to the nucleus. It is found in the mitochondrion. Its function is as follows. Involved in pre-mRNA polyadenylation. May act to repress the ability of PAB1 to negatively regulate polyadenylation. Negative regulator of poly(A) nuclease (PAN) activity. Promotes mating-type switching in mother cells by positively regulating HO mRNA translation. Localizes MKT1 to polysomes. The polypeptide is PAB1-binding protein 1 (PBP1) (Saccharomyces cerevisiae (strain ATCC 204508 / S288c) (Baker's yeast)).